The primary structure comprises 478 residues: Serine hydroxymethyltransferase (478 aa).

(6S)-5,6,7,8-tetrahydrofolate-binding positions include L161 and 165 to 167; that span reads GHL. K273 carries the N6-(pyridoxal phosphate)lysine modification. E291 provides a ligand contact to (6S)-5,6,7,8-tetrahydrofolate.

The protein belongs to the SHMT family. As to quaternary structure, homodimer. The cofactor is pyridoxal 5'-phosphate.

It is found in the cytoplasm. It carries out the reaction (6R)-5,10-methylene-5,6,7,8-tetrahydrofolate + glycine + H2O = (6S)-5,6,7,8-tetrahydrofolate + L-serine. It participates in one-carbon metabolism; tetrahydrofolate interconversion. The protein operates within amino-acid biosynthesis; glycine biosynthesis; glycine from L-serine: step 1/1. In terms of biological role, catalyzes the reversible interconversion of serine and glycine with tetrahydrofolate (THF) serving as the one-carbon carrier. This reaction serves as the major source of one-carbon groups required for the biosynthesis of purines, thymidylate, methionine, and other important biomolecules. Also exhibits THF-independent aldolase activity toward beta-hydroxyamino acids, producing glycine and aldehydes, via a retro-aldol mechanism. The protein is Serine hydroxymethyltransferase of Salinispora tropica (strain ATCC BAA-916 / DSM 44818 / JCM 13857 / NBRC 105044 / CNB-440).